The following is a 438-amino-acid chain: Mannose-1-phosphate guanylyltransferase regulatory subunit alpha (438 aa).

The interval Leu-2–Ala-260 is substrate-binding domain. GDP-alpha-D-mannose is bound by residues Glu-87 and Gln-256. Residues Leu-282 to Leu-438 are hexapeptide repeat domain. Residues Thr-373–Ile-402 form a C-loop region.

It belongs to the transferase hexapeptide repeat family. Component of the GMPPA-GMPPB mannose-1-phosphate guanylyltransferase complex composed of 4 GMPPA subunits and 8 GMPPB subunits; the complex is organized into three layers, a central layer made up of 2 GMPPA dimers sandwiched between two layers each made up of 2 GMPPB dimers.

Its function is as follows. Regulatory subunit of the GMPPA-GMPPB mannose-1-phosphate guanylyltransferase complex; reduces the catalytic activity of GMPPB when part of the complex. Mediates allosteric feedback inhibition of GMPPB catalytic activity upon binding GDP-alpha-D-mannose. Together with GMPPB regulates GDP-alpha-D-mannose levels. In Drosophila melanogaster (Fruit fly), this protein is Mannose-1-phosphate guanylyltransferase regulatory subunit alpha.